Consider the following 967-residue polypeptide: Zinc finger protein with KRAB and SCAN domains 2 (967 aa).

A Glycyl lysine isopeptide (Lys-Gly) (interchain with G-Cter in SUMO2) cross-link involves residue lysine 22. Residues 45 to 127 enclose the SCAN box domain; it reads RKCFRQFCYE…ALVVHLEKET (83 aa). The interval 150-205 is disordered; that stretch reads WEVADFQPEQVETQPRAVSREEPGSLHSGHQEQLNRKRERRPLPKNARPSPWVPAL. Residues 167-185 are compositionally biased toward basic and acidic residues; the sequence is VSREEPGSLHSGHQEQLNR. The KRAB domain maps to 229 to 300; sequence VKDVHVARGF…GLHSSNKRSI (72 aa). Residues lysine 242, lysine 259, lysine 277, lysine 337, lysine 482, and lysine 529 each participate in a glycyl lysine isopeptide (Lys-Gly) (interchain with G-Cter in SUMO2) cross-link. The span at 586-602 shows a compositional bias: low complexity; the sequence is RASAPSPSTPEEVPSPS. Residues 586 to 626 are disordered; the sequence is RASAPSPSTPEEVPSPSRQERGGIEVEPQEPTGWEPEETSQ. 2 positions are modified to phosphoserine: serine 591 and serine 600. Glycyl lysine isopeptide (Lys-Gly) (interchain with G-Cter in SUMO2) cross-links involve residues lysine 734, lysine 745, and lysine 752. 6 consecutive C2H2-type zinc fingers follow at residues 775-797, 803-825, 831-853, 859-881, 887-909, and 915-937; these read YKCG…QRIH, FKCL…QRIH, YRCG…QRTH, YQCG…RRVH, YKCV…RRIH, and YGCA…REVH. Residues 941–967 are disordered; it reads KPLPHPPSLYCPENPHKGKTDEFRKTF. Basic and acidic residues predominate over residues 954 to 967; the sequence is NPHKGKTDEFRKTF.

This sequence belongs to the krueppel C2H2-type zinc-finger protein family.

Its subcellular location is the nucleus. May be involved in transcriptional regulation. In Homo sapiens (Human), this protein is Zinc finger protein with KRAB and SCAN domains 2 (ZKSCAN2).